The primary structure comprises 420 residues: Glutamyl-tRNA reductase (420 aa).

Residues 49–52, serine 109, 114–116, and glutamine 120 each bind substrate; these read TCNR and EPQ. The Nucleophile role is filled by cysteine 50. Position 189–194 (189–194) interacts with NADP(+); that stretch reads GAGETI.

The protein belongs to the glutamyl-tRNA reductase family. In terms of assembly, homodimer.

It carries out the reaction (S)-4-amino-5-oxopentanoate + tRNA(Glu) + NADP(+) = L-glutamyl-tRNA(Glu) + NADPH + H(+). It functions in the pathway porphyrin-containing compound metabolism; protoporphyrin-IX biosynthesis; 5-aminolevulinate from L-glutamyl-tRNA(Glu): step 1/2. Functionally, catalyzes the NADPH-dependent reduction of glutamyl-tRNA(Glu) to glutamate 1-semialdehyde (GSA). This is Glutamyl-tRNA reductase from Proteus mirabilis (strain HI4320).